The chain runs to 606 residues: Transmembrane 9 superfamily member 1 (606 aa).

Residues 1–27 form the signal peptide; sequence MTVVGNPRSWSCRWLPILILLLGTGHG. N-linked (GlcNAc...) asparagine glycosylation is present at Asn178. The next 4 helical transmembrane spans lie at 237–257, 310–330, 339–359, and 373–393; these read LSIINSMVLVFLLVGFVAVIL, VLGVGAQFLALGTGIIVMALL, GAINSAAILLYALTCCISGYV, and VWNIILTTSLFSVPFFLTWSV. An N-linked (GlcNAc...) asparagine glycan is attached at Asn401. A run of 4 helical transmembrane segments spans residues 412–432, 469–489, 499–519, and 535–555; these read ILLLLTVWLLVGFPLTVIGGI, VGGFLPFSAISVELYYIFATV, GILFFVFAILLSVGACISIAL, and SVLSVGSTGLFIFLYSVFYYA. The N-linked (GlcNAc...) asparagine glycan is linked to Asn559. Residues 570 to 590 traverse the membrane as a helical segment; that stretch reads FGYSLLTGYVFFLMLGTISFF.

Belongs to the nonaspanin (TM9SF) (TC 9.A.2) family.

It is found in the lysosome membrane. The protein localises to the cytoplasmic vesicle. The protein resides in the autophagosome membrane. Its function is as follows. Plays an essential role in autophagy. This is Transmembrane 9 superfamily member 1 (TM9SF1) from Pongo abelii (Sumatran orangutan).